Reading from the N-terminus, the 139-residue chain is ATP synthase epsilon chain (139 aa).

The protein belongs to the ATPase epsilon chain family. F-type ATPases have 2 components, CF(1) - the catalytic core - and CF(0) - the membrane proton channel. CF(1) has five subunits: alpha(3), beta(3), gamma(1), delta(1), epsilon(1). CF(0) has three main subunits: a, b and c.

It localises to the cell inner membrane. In terms of biological role, produces ATP from ADP in the presence of a proton gradient across the membrane. This chain is ATP synthase epsilon chain, found in Haemophilus ducreyi (strain 35000HP / ATCC 700724).